A 215-amino-acid polypeptide reads, in one-letter code: Putative zinc finger protein ORF121 (215 aa).

The RING-type; degenerate zinc-finger motif lies at 53–105 (CVICMEPTYTKKTLAECDIEGGALRVTTMPCPTHYICDNCIRQEMEDKCPICR).

The protein is Putative zinc finger protein ORF121 of Magallana gigas (Pacific oyster).